The sequence spans 801 residues: MIVTYNWLKEFVDFDLSPQELSDLLTMLGLEVEGVRHVGGGLDEVVVAVVEERSQHPNADKLSLCRVNNGKETLAIVCGAQNFKAGDKVALAQIGAVLPGDFKIKRSKIRGEESCGMLCSEKELGLAAESEGIIILPTDLPLGVPVFDALGLKDTIFEIGLTPNRADCLSVVGIAREIAAKLGTTVKYARPSVKESVVPISERAQVIVEDSDLCPRYTARYIAGCSIGPSPAWLVRRLEAVGMRSINNVVDVTNYVLMEYGHPLHAFDADLLAGGKIVVRRAAAGERFTTLDGQERVLTESDLTIRDGEKGVALAGIMGGENSEIRQETSNILLESAYFNPSAIRRTSKRLGLHTESSHRFERGADVDILVTALDRAASLIAELAGGRVATGTIDVYPRPLPRRTVRFRVDQCNRLLGIQLTADEMAAIFNRLEFKVNVVEPELFDIDVPSCRVDIEREIDLVEEVARLNGYNNIPVTMPKARVFSDRPTRHQRLEKQLRNVMVGQGFSEVITFSFMAPGILDKLLLAHDDPRRSVVRLRNPLVEEQSVMRTTLLPGLLDVAARNINYRMLTLRLFELRRVYLPAEGQELPREPLHLAGIMTGVRYREGWNQERHQVDFYDVKGVIEHILDEFAIGSVVFVQDRLDPYFHPGKACSILCGNELLGSFGELHPDIHDNFGIDQSVYYLDLDFEKLAMVSSDNVAIKPPSRFPDTFRDIAMLIKDETPASTIVECISGLRIREVECAEIFDHYKGSHVPEGFKSIAVRIRYRSHERTLVDNEVTPLHQRIVDTLVKKLAVTIR.

In terms of domain architecture, tRNA-binding spans glycine 39–phenylalanine 147. Residues leucine 401–valine 477 enclose the B5 domain. The Mg(2+) site is built by aspartate 455, aspartate 461, glutamate 464, and glutamate 465. The 94-residue stretch at serine 708 to arginine 801 folds into the FDX-ACB domain.

Belongs to the phenylalanyl-tRNA synthetase beta subunit family. Type 1 subfamily. In terms of assembly, tetramer of two alpha and two beta subunits. It depends on Mg(2+) as a cofactor.

Its subcellular location is the cytoplasm. It catalyses the reaction tRNA(Phe) + L-phenylalanine + ATP = L-phenylalanyl-tRNA(Phe) + AMP + diphosphate + H(+). The chain is Phenylalanine--tRNA ligase beta subunit from Geobacter metallireducens (strain ATCC 53774 / DSM 7210 / GS-15).